Consider the following 137-residue polypeptide: Cellular retinoic acid-binding protein 1 (137 aa).

The Nuclear localization signal signature appears at 21-31 (KALGVNAMLRK). 132 to 134 (RIY) provides a ligand contact to all-trans-retinoate.

The protein belongs to the calycin superfamily. Fatty-acid binding protein (FABP) family.

It localises to the cytoplasm. Functionally, cytosolic CRABPs may regulate the access of retinoic acid to the nuclear retinoic acid receptors. The sequence is that of Cellular retinoic acid-binding protein 1 (CRABP1) from Homo sapiens (Human).